The primary structure comprises 242 residues: Trypsin-1 (242 aa).

The N-terminal stretch at 1 to 15 is a signal peptide; it reads MISLVFVLLIGAAFA. Residues 16–20 constitute a propeptide, activation peptide; it reads TEDDK. The Peptidase S1 domain occupies 21–240; the sequence is IVGGYECKAY…FNDWLTSTMA (220 aa). Intrachain disulfides connect cysteine 27-cysteine 156, cysteine 45-cysteine 61, cysteine 129-cysteine 229, cysteine 136-cysteine 202, cysteine 167-cysteine 181, and cysteine 192-cysteine 216. The Charge relay system role is filled by histidine 60. Ca(2+) is bound by residues glutamate 72, asparagine 74, valine 77, and glutamate 82. Residue aspartate 104 is the Charge relay system of the active site. The Charge relay system role is filled by serine 196.

Belongs to the peptidase S1 family. Ca(2+) serves as cofactor.

The protein resides in the secreted. Its subcellular location is the extracellular space. The catalysed reaction is Preferential cleavage: Arg-|-Xaa, Lys-|-Xaa.. The protein is Trypsin-1 of Salmo salar (Atlantic salmon).